The primary structure comprises 340 residues: Major histocompatibility complex class I-related protein 1 (340 aa).

The signal sequence occupies residues M1 to S22. The segment at R23–S109 is alpha-1. An antigen-binding cleft region spans residues R23 to T201. At R23–M302 the chain is on the extracellular side. 8-(9H-purin-6-yl)-2-oxa-8-azabicyclo[3.3.1]nona-3,6-diene-4,6-dicarbaldehyde-binding residues include Y29 and R31. Residues R31, S46, and K65 each coordinate 5-(2-oxoethylideneamino)-6-(D-ribitylamino)uracil. Positions 31, 46, and 65 each coordinate 5-(2-oxopropylideneamino)-6-(D-ribitylamino)uracil. 7-hydroxy-6-methyl-8-(1-D-ribityl)lumazine-binding residues include R31, S46, and K65. Residues K65 and H80 each coordinate 8-(9H-purin-6-yl)-2-oxa-8-azabicyclo[3.3.1]nona-3,6-diene-4,6-dicarbaldehyde. K65 is a binding site for 2-amino-4-oxopteridine-6-carbaldehyde. Residue K65 coordinates pyridoxal. Residue N107 is glycosylated (N-linked (GlcNAc...) asparagine). Positions G110 to T201 are alpha-2. Residue R116 coordinates 8-(9H-purin-6-yl)-2-oxa-8-azabicyclo[3.3.1]nona-3,6-diene-4,6-dicarbaldehyde. R116, Y174, and Q175 together coordinate 5-(2-oxoethylideneamino)-6-(D-ribitylamino)uracil. 5-(2-oxopropylideneamino)-6-(D-ribitylamino)uracil-binding residues include R116, Y174, and Q175. The 7-hydroxy-6-methyl-8-(1-D-ribityl)lumazine site is built by R116, Y174, and Q175. Intrachain disulfides connect C120–C183 and C222–C278. The alpha-3 stretch occupies residues E202–Q293. The 80-residue stretch at P203–H282 folds into the Ig-like C1-type domain. A connecting peptide region spans residues E294–M302. A helical transmembrane segment spans residues K303–W323. At R324–D340 the chain is on the cytoplasmic side.

The protein belongs to the MHC class I family. As to quaternary structure, heterotrimer that consists of MR1, B2M and metabolite antigen. Major classes of metabolite ligands presented by MR1 include riboflavin-related antigens, pyrimidines and ribityl lumazines, nucleobase adducts and folate derivatives. Forms reversible covalent Schiff base complexes with microbial pyrimidine-based metabolite, which serves as a molecular switch triggering complete folding, stable association with B2M and translocation of the ternary complex from endoplasmic reticulum to the plasma membrane. Alternatively, forms non-Schiff base complexes with ribityl lumazines. On antigen-presenting cells, the ternary complex interacts with TCR on MR1-restricted T cells. Interacts with TAPBP and TAPBPL chaperones in the endoplasmic reticulum. TAPBP associated or not with MHC class I peptide loading complex binds ligand-free MR1 or MR1-B2M complex, providing for stable MR1 pools ready for metabolite antigen processing. TAPBPL interacts with MR1 in a ligand-independent way; this interaction may stabilize MR1 pool and facilitate ligand loading and dissociation. Structurally, MR1-B2M heterodimer adopts a topology similar to classical MHC class I molecules, with alpha-1 and alpha-2 domains of MR1 forming the antigen-binding cleft composed of two alpha-helices resting on a floor of 7-stranded anti-parallel beta-pleated sheet. MR1-B2M heterodimer (via alpha-helices) interacts with TCR (via CDR domains). Post-translationally, N-glycosylated.

It is found in the cell membrane. The protein localises to the endoplasmic reticulum membrane. It localises to the golgi apparatus membrane. The protein resides in the early endosome membrane. Its subcellular location is the late endosome membrane. Antigen-presenting molecule specialized in displaying microbial pyrimidine-based metabolites to alpha-beta T cell receptors (TCR) on innate-type mucosal-associated invariant T (MAIT) cells. In complex with B2M preferentially presents riboflavin-derived metabolites to semi-invariant TCRs on MAIT cells, guiding immune surveillance of the microbial metabolome at mucosal epithelial barriers. Signature pyrimidine-based microbial antigens are generated via non-enzymatic condensation of metabolite intermediates of the riboflavin pathway with by-products arising from other metabolic pathways such as glycolysis. Typical potent antigenic metabolites are 5-(2-oxoethylideneamino)-6-D-ribitylaminouracil (5-OE-RU) and 5-(2-oxopropylideneamino)-6-D-ribitylaminouracil (5-OP-RU), products of condensation of 5-amino-6-D-ribityaminouracil (5-A-RU) with glyoxal or methylglyoxal by-products, respectively. May present microbial antigens to various MAIT cell subsets, providing for unique recognition of diverse microbes, including pathogens that do not synthesize riboflavin. Upon antigen recognition, elicits rapid innate-type MAIT cell activation to eliminate pathogenic microbes by directly killing infected cells. During T cell development, drives thymic selection and post-thymic terminal differentiation of MAIT cells in a process dependent on commensal microflora. Acts as an immune sensor of cancer cell metabolome. May present a tumor-specific or -associated metabolite essential for cancer cell survival to a pan-cancer TCR on a non-MAIT CD8-positive T cell clone, triggering T cell-mediated killing of a wide range of cancer cell types. May present tumor-enriched pyridoxal and pyridoxal 5'-phosphate antigens, enabling preferential recognition of cancer cells. Presents nucleobase carbonyl adducts generated during oxidative stress. Captures M3Ade, a nucleobase adduct composed of one adenine modified by a malondialdehyde trimer, for recognition by MR1-restricted T cell clones expressing a polyclonal TCR repertoire. This Pongo abelii (Sumatran orangutan) protein is Major histocompatibility complex class I-related protein 1.